Consider the following 254-residue polypeptide: MGLIKNTVHYCCVSRDNQILYSYNGGDQTNESLAALCLEKSPPFHTWYFETIGKRRFGFLIGDGFVYFAIVDEVLKRSSVLKFLEHLRDEFKKAARENSRGSFTAMIGSINVEDQLVPVVTRLIASLERVAESSSNNELKSSNLGEQSEGSNSTKAPLLGRLSKQEKKKGKDHVIELEEHRKSNDRGNITDDSAGAGTSLEKECVSSSGRSVTQSFEWKWRRLVQIVLAIDAAICLTLFGIWLAICRGIECTRS.

The Longin domain maps to 12–113 (CVSRDNQILY…TAMIGSINVE (102 aa)). Positions 138–173 (ELKSSNLGEQSEGSNSTKAPLLGRLSKQEKKKGKDH) are disordered. The span at 145–155 (GEQSEGSNSTK) shows a compositional bias: polar residues. Residues 226 to 246 (IVLAIDAAICLTLFGIWLAIC) traverse the membrane as a helical; Anchor for type IV membrane protein segment.

Belongs to the synaptobrevin family.

The protein resides in the membrane. Functionally, non-SNARE longin protein involved in membrane-trafficking machinery. The polypeptide is Phytolongin Phyl1.1 (Arabidopsis thaliana (Mouse-ear cress)).